We begin with the raw amino-acid sequence, 121 residues long: Putative RNase MJ1216 (121 aa).

Residues arginine 76 and histidine 81 contribute to the active site. Positions 76-83 (RDKLIHQY) match the RX(4)HXY motif motif. An O-di-AMP-tyrosine modification is found at tyrosine 83.

Belongs to the HepT RNase toxin family. As to quaternary structure, homodimer, probably forms a complex with antitoxin MJ1215 or MJ1217. Post-translationally, modified by antitoxin MJ1215 or MJ1217; probably at least 2 successive AMPylation events occur on Tyr-83.

Its function is as follows. Probable toxic component of a putative type VII toxin-antitoxin (TA) system, probably an RNase. Probably neutralized by antitoxin MJ1215 or MJ1217. Neutralization may be due to AMPylation by antitoxin. The polypeptide is Putative RNase MJ1216 (Methanocaldococcus jannaschii (strain ATCC 43067 / DSM 2661 / JAL-1 / JCM 10045 / NBRC 100440) (Methanococcus jannaschii)).